A 200-amino-acid polypeptide reads, in one-letter code: Superoxide dismutase [Mn] 1 (200 aa).

Positions 29, 76, 158, and 162 each coordinate Mn(2+).

It belongs to the iron/manganese superoxide dismutase family. In terms of assembly, homodimer or homotetramer. Requires Mn(2+) as cofactor.

The catalysed reaction is 2 superoxide + 2 H(+) = H2O2 + O2. With respect to regulation, inhibited by hydrogen peroxide. Is resistant to cyanide and azide inhibition. Its function is as follows. Destroys superoxide anion radicals which are normally produced within the cells and which are toxic to biological systems. The chain is Superoxide dismutase [Mn] 1 (sod1) from Halobacterium salinarum (strain ATCC 700922 / JCM 11081 / NRC-1) (Halobacterium halobium).